Here is a 30-residue protein sequence, read N- to C-terminus: Babycurus-toxin 1 (30 aa).

The 29-residue stretch at 2-30 folds into the LCN-type CS-alpha/beta domain; that stretch reads KDGYPTNSKGCKISGCLPGENKFCLNECQ.

This sequence belongs to the long (4 C-C) scorpion toxin superfamily. Sodium channel inhibitor family. As to expression, expressed by the venom gland.

It is found in the secreted. Its function is as follows. Binds to sodium channels (Nav) and inhibits both the activation and inactivation of the activated channels, thereby blocking neuronal transmission. The protein is Babycurus-toxin 1 of Babycurus centrurimorphus (East African scorpion).